The primary structure comprises 147 residues: Large ribosomal subunit protein uL16 (147 aa).

The protein belongs to the universal ribosomal protein uL16 family. In terms of assembly, part of the 50S ribosomal subunit.

In terms of biological role, binds 23S rRNA and is also seen to make contacts with the A and possibly P site tRNAs. This chain is Large ribosomal subunit protein uL16, found in Clostridium botulinum (strain ATCC 19397 / Type A).